Consider the following 322-residue polypeptide: MSYSNLKLFALSSNKELAKKVSQTIGIPLGQSTVRQFSDGEIQVNIEESIRGHHVFILQSTSSPVNDNLMEILIMVDALKRASAESVSVVMPYYGYARQDRKARSREPITSKLVANMLEVAGVDRLLTVDLHAAQIQGFFDIPVDHLMGAPLIADYFDRQGLVGDDVVVVSPDHGGVTRARKLAQCLKTPIAIIDKRRSVTKMNTSEVMNIIGNIKGKKCILIDDMIDTAGTICHAADALAEAGATAVYASCTHPVLSGPALDNIQNSAIEKLIVLDTIYLPEERLIDKIEQISIAELIGEAIIRIHEKRPLSPLFEMNKLK.

ATP is bound by residues 39 to 41 (DGE) and 98 to 99 (RQ). Mg(2+) is bound by residues His-132 and Asp-173. Lys-196 is an active-site residue. D-ribose 5-phosphate is bound by residues Arg-198, Asp-224, and 228-232 (DTAGT).

Belongs to the ribose-phosphate pyrophosphokinase family. Class I subfamily. In terms of assembly, homohexamer. Requires Mg(2+) as cofactor.

The protein localises to the cytoplasm. It carries out the reaction D-ribose 5-phosphate + ATP = 5-phospho-alpha-D-ribose 1-diphosphate + AMP + H(+). The protein operates within metabolic intermediate biosynthesis; 5-phospho-alpha-D-ribose 1-diphosphate biosynthesis; 5-phospho-alpha-D-ribose 1-diphosphate from D-ribose 5-phosphate (route I): step 1/1. Functionally, involved in the biosynthesis of the central metabolite phospho-alpha-D-ribosyl-1-pyrophosphate (PRPP) via the transfer of pyrophosphoryl group from ATP to 1-hydroxyl of ribose-5-phosphate (Rib-5-P). The chain is Ribose-phosphate pyrophosphokinase 1 from Streptococcus agalactiae serotype III (strain NEM316).